A 103-amino-acid polypeptide reads, in one-letter code: Co-chaperonin GroES (103 aa).

This sequence belongs to the GroES chaperonin family. In terms of assembly, heptamer of 7 subunits arranged in a ring. Interacts with the chaperonin GroEL.

It is found in the cytoplasm. Its function is as follows. Together with the chaperonin GroEL, plays an essential role in assisting protein folding. The GroEL-GroES system forms a nano-cage that allows encapsulation of the non-native substrate proteins and provides a physical environment optimized to promote and accelerate protein folding. GroES binds to the apical surface of the GroEL ring, thereby capping the opening of the GroEL channel. The polypeptide is Co-chaperonin GroES (Synechococcus sp. (strain JA-2-3B'a(2-13)) (Cyanobacteria bacterium Yellowstone B-Prime)).